The following is a 250-amino-acid chain: Endomucin (250 aa).

A signal peptide spans 1–20 (MRLLQVTALFFLLSNSLCRG). Low complexity-rich tracts occupy residues 24–38 (KALT…SATT) and 45–60 (TNKS…TTNS). Disordered stretches follow at residues 24–83 (KALT…ETTT) and 105–153 (NAVS…LTTA). 3 N-linked (GlcNAc...) asparagine glycosylation sites follow: N46, N115, and N119. Composition is skewed to polar residues over residues 105 to 135 (NAVS…NQLP) and 143 to 153 (TETPSASLTTA). A helical transmembrane segment spans residues 180 to 200 (VILPVVIALIVITVLVFTLVG). A disordered region spans residues 210 to 250 (PGTPESGNDQPQSDKESVKLLTVKTISHESGEHSAQGKAKN). S226 carries the phosphoserine modification.

Post-translationally, highly O-glycosylated. Sialic acid-rich glycoprotein.

The protein localises to the membrane. In terms of biological role, endothelial sialomucin, also called endomucin or mucin-like sialoglycoprotein, which interferes with the assembly of focal adhesion complexes and inhibits interaction between cells and the extracellular matrix. The protein is Endomucin (Emcn) of Rattus norvegicus (Rat).